We begin with the raw amino-acid sequence, 259 residues long: AA9 family lytic polysaccharide monooxygenase E (259 aa).

A signal peptide spans 1–20; it reads MKATVLAGLAAVIAAQGVAG. Cu(2+) contacts are provided by H21 and H99. C69 and C193 form a disulfide bridge. Residues H179 and Q188 each contribute to the O2 site. Position 190 (Y190) interacts with Cu(2+).

This sequence belongs to the polysaccharide monooxygenase AA9 family. It depends on Cu(2+) as a cofactor.

The protein localises to the secreted. The catalysed reaction is [(1-&gt;4)-beta-D-glucosyl]n+m + reduced acceptor + O2 = 4-dehydro-beta-D-glucosyl-[(1-&gt;4)-beta-D-glucosyl]n-1 + [(1-&gt;4)-beta-D-glucosyl]m + acceptor + H2O.. In terms of biological role, lytic polysaccharide monooxygenase (LPMO) that depolymerizes crystalline and amorphous polysaccharides via the oxidation of scissile alpha- or beta-(1-4)-glycosidic bonds, yielding C1 or C4 oxidation products. Catalysis by LPMOs requires the reduction of the active-site copper from Cu(II) to Cu(I) by a reducing agent and H(2)O(2) or O(2) as a cosubstrate. This is AA9 family lytic polysaccharide monooxygenase E from Malbranchea cinnamomea (Thermophilic fungus).